The chain runs to 101 residues: Putative membrane protein insertion efficiency factor (101 aa).

The protein belongs to the UPF0161 family.

Its subcellular location is the cell inner membrane. Could be involved in insertion of integral membrane proteins into the membrane. The protein is Putative membrane protein insertion efficiency factor of Methylobacterium sp. (strain 4-46).